Here is a 681-residue protein sequence, read N- to C-terminus: Methionine--tRNA ligase (681 aa).

Positions 12-22 (PYANGSIHLGH) match the 'HIGH' region motif. 4 residues coordinate Zn(2+): Cys143, Cys146, Cys156, and Cys159. Residues 327 to 331 (KMSKS) carry the 'KMSKS' region motif. ATP is bound at residue Lys330. The segment covering 545 to 557 (FEKSNPEKAKQDP) has biased composition (basic and acidic residues). The segment at 545–566 (FEKSNPEKAKQDPSKSNTNEVK) is disordered. In terms of domain architecture, tRNA-binding spans 580-681 (ELSKVELRVG…RDASPGDLLK (102 aa)).

It belongs to the class-I aminoacyl-tRNA synthetase family. MetG type 1 subfamily. In terms of assembly, homodimer. Zn(2+) serves as cofactor.

The protein resides in the cytoplasm. The catalysed reaction is tRNA(Met) + L-methionine + ATP = L-methionyl-tRNA(Met) + AMP + diphosphate. Is required not only for elongation of protein synthesis but also for the initiation of all mRNA translation through initiator tRNA(fMet) aminoacylation. This Leptospira biflexa serovar Patoc (strain Patoc 1 / ATCC 23582 / Paris) protein is Methionine--tRNA ligase.